The sequence spans 257 residues: Nickel import system ATP-binding protein NikD (257 aa).

The ABC transporter domain occupies 4-245 (IDIQNLTIKN…HLHPYTERLI (242 aa)). 37 to 44 (GESGAGKS) contacts ATP.

This sequence belongs to the ABC transporter superfamily. As to quaternary structure, the complex is composed of two ATP-binding proteins (NikD and NikE), two transmembrane proteins (NikB and NikC) and a solute-binding protein (NikA).

Its subcellular location is the cell membrane. The enzyme catalyses Ni(2+)(out) + ATP + H2O = Ni(2+)(in) + ADP + phosphate + H(+). Part of the ABC transporter complex NikABCDE (Opp2) involved in nickel import. Probably responsible for energy coupling to the transport system. The polypeptide is Nickel import system ATP-binding protein NikD (Staphylococcus aureus (strain MW2)).